We begin with the raw amino-acid sequence, 424 residues long: Omega-6 fatty acid desaturase, chloroplastic (424 aa).

Residues 1–63 (MACTLADSLL…TRNKVTVIHA (63 aa)) constitute a chloroplast transit peptide. At V64 the chain carries N-acetylvaline. The Histidine box-1 signature appears at 165–169 (HDCAH). Residues 201–205 (HDRHH) carry the Histidine box-2 motif. The short motif at 361-365 (HIPHH) is the Histidine box-3 element.

The protein belongs to the fatty acid desaturase type 1 family.

The protein localises to the plastid. It localises to the chloroplast membrane. It catalyses the reaction a (9Z)-octadecenoyl-containing glycerolipid + 2 reduced [2Fe-2S]-[ferredoxin] + O2 + 2 H(+) = a (9Z,12Z)-octadecadienoyl-containing glycerolipid + 2 oxidized [2Fe-2S]-[ferredoxin] + 2 H2O. Its pathway is lipid metabolism; polyunsaturated fatty acid biosynthesis. Chloroplast omega-6 fatty acid desaturase introduces the second double bond in the biosynthesis of 16:3 and 18:3 fatty acids, important constituents of plant membranes. It is thought to use ferredoxin as an electron donor and to act on fatty acids esterified to galactolipids, sulfolipids and phosphatidylglycerol. The protein is Omega-6 fatty acid desaturase, chloroplastic of Glycine max (Soybean).